The sequence spans 376 residues: MSQEVLTLAQDLISRPSVTPLDEGCQTLMAERLAAQGFEIESMVFEDTTNMWARRGKEGPLFCFAGHTDVVPVGDLNRWHTPPFDPVVIDGYLHGRGAADMKGSLAAMVVATERFVEKHPDHNGSIAFLITSDEEGPFINGTTRVIDTLEARNEKITWSLVGEPSSTHKLGDIVKNGRRGSLTGNLTINGIQGHVAYPHLADNPIHKAAPALDELARMKWDNGNEFFPPTSFQIANINGGTGASNVIPGALEVMFNFRYSTEVTAEILIQRVLNILDAHGLDYDISWIFNGLPFLTGDGPLLDATREAIKQVTGSDTDPQTSGGTSDGRFIAPTGAHVIELGPVNATIHKVNECVKVSDLELLTQCYEVILEKLLC.

Residue His-67 coordinates Zn(2+). The active site involves Asp-69. Asp-100 serves as a coordination point for Zn(2+). The active-site Proton acceptor is Glu-134. 3 residues coordinate Zn(2+): Glu-135, Glu-163, and His-349.

The protein belongs to the peptidase M20A family. DapE subfamily. In terms of assembly, homodimer. The cofactor is Zn(2+). It depends on Co(2+) as a cofactor.

The catalysed reaction is N-succinyl-(2S,6S)-2,6-diaminopimelate + H2O = (2S,6S)-2,6-diaminopimelate + succinate. Its pathway is amino-acid biosynthesis; L-lysine biosynthesis via DAP pathway; LL-2,6-diaminopimelate from (S)-tetrahydrodipicolinate (succinylase route): step 3/3. In terms of biological role, catalyzes the hydrolysis of N-succinyl-L,L-diaminopimelic acid (SDAP), forming succinate and LL-2,6-diaminopimelate (DAP), an intermediate involved in the bacterial biosynthesis of lysine and meso-diaminopimelic acid, an essential component of bacterial cell walls. The polypeptide is Succinyl-diaminopimelate desuccinylase (Shewanella woodyi (strain ATCC 51908 / MS32)).